A 297-amino-acid polypeptide reads, in one-letter code: GTP cyclohydrolase FolE2 (297 aa).

Disordered regions lie at residues 1–21 and 180–207; these read MTHA…SERD and IRAE…RERP.

Belongs to the GTP cyclohydrolase IV family.

The enzyme catalyses GTP + H2O = 7,8-dihydroneopterin 3'-triphosphate + formate + H(+). The protein operates within cofactor biosynthesis; 7,8-dihydroneopterin triphosphate biosynthesis; 7,8-dihydroneopterin triphosphate from GTP: step 1/1. In terms of biological role, converts GTP to 7,8-dihydroneopterin triphosphate. This is GTP cyclohydrolase FolE2 from Methylibium petroleiphilum (strain ATCC BAA-1232 / LMG 22953 / PM1).